We begin with the raw amino-acid sequence, 566 residues long: ATP-binding protein SyrD (566 aa).

In terms of domain architecture, ABC transmembrane type-1 spans 22-301; sequence HPWLTFFTLL…LVSAMPMLAQ (280 aa). 6 consecutive transmembrane segments (helical) span residues 24–44, 61–81, 132–152, 158–178, 250–270, and 279–299; these read WLTF…IAVV, LFWF…ASLF, LLIM…IAYL, VVFA…LLFF, QLTL…FAVI, and VLAV…MPML. In terms of domain architecture, ABC transporter spans 343-566; that stretch reads IQLKNVHMNY…VKCAVEGKRA (224 aa). Residue 380–387 coordinates ATP; sequence GGNGCGKS.

This sequence belongs to the ABC transporter superfamily. As to quaternary structure, dimer.

It is found in the cell inner membrane. In terms of biological role, ATP-driven efflux pump necessary for the secretion of syringomycin. May specifically bind syringomycin and translocate it to the periplasmic space. SyrD is also required for full expression of the syrB gene. In Pseudomonas syringae pv. syringae, this protein is ATP-binding protein SyrD (syrD).